Reading from the N-terminus, the 226-residue chain is 2-C-methyl-D-erythritol 4-phosphate cytidylyltransferase (226 aa).

Belongs to the IspD/TarI cytidylyltransferase family. IspD subfamily.

It carries out the reaction 2-C-methyl-D-erythritol 4-phosphate + CTP + H(+) = 4-CDP-2-C-methyl-D-erythritol + diphosphate. It functions in the pathway isoprenoid biosynthesis; isopentenyl diphosphate biosynthesis via DXP pathway; isopentenyl diphosphate from 1-deoxy-D-xylulose 5-phosphate: step 2/6. Catalyzes the formation of 4-diphosphocytidyl-2-C-methyl-D-erythritol from CTP and 2-C-methyl-D-erythritol 4-phosphate (MEP). This Rhodococcus opacus (strain B4) protein is 2-C-methyl-D-erythritol 4-phosphate cytidylyltransferase.